Here is a 717-residue protein sequence, read N- to C-terminus: Delta-like protein D (717 aa).

Positions 1 to 19 (MGRLMIAVLLCVMISQGFC) are cleaved as a signal peptide. The Extracellular segment spans residues 20 to 547 (SGVFELKLQE…EEDDGGFPWT (528 aa)). Residues 175-219 (FVCDEHYYGEGCSVFCRPRDDTFGHFTCGERGEIICNSGWKGQYC) form the DSL domain. Intrachain disulfides connect cysteine 177–cysteine 186, cysteine 190–cysteine 202, cysteine 210–cysteine 219, cysteine 224–cysteine 235, cysteine 228–cysteine 241, cysteine 243–cysteine 252, cysteine 261–cysteine 266, cysteine 274–cysteine 283, cysteine 290–cysteine 302, cysteine 296–cysteine 312, cysteine 314–cysteine 323, cysteine 330–cysteine 341, cysteine 335–cysteine 350, cysteine 352–cysteine 361, cysteine 368–cysteine 379, cysteine 373–cysteine 389, cysteine 391–cysteine 400, cysteine 407–cysteine 418, cysteine 412–cysteine 427, cysteine 429–cysteine 438, cysteine 445–cysteine 456, cysteine 450–cysteine 465, cysteine 467–cysteine 476, cysteine 483–cysteine 494, cysteine 488–cysteine 503, and cysteine 505–cysteine 514. EGF-like domains lie at 220-253 (TEPI…KYCD), 257-284 (RYPG…LFCN), and 286-324 (DLNY…DSCE). The 37-residue stretch at 326–362 (EVNECSGSPCRNGGSCTDLENTYSCTCPPGFYGRNCE) folds into the EGF-like 4; calcium-binding domain. 2 EGF-like domains span residues 364–401 (SAMT…FNCE) and 403–439 (KIDH…THCE). An EGF-like 7; calcium-binding domain is found at 441-477 (NIDECATYPCQNGGTCQDGLSDYTCTCPPGYTGKNCT). Asparagine 475 carries an N-linked (GlcNAc...) asparagine glycan. The region spanning 479–515 (AVNKCLHNPCHNGATCHEMDNRYVCACIPGYGGRNCQ) is the EGF-like 8 domain. Residues 548-568 (AVCAGIILVLLVLIGGSVFVI) traverse the membrane as a helical segment. Residues 569 to 717 (YIRLKLQQRS…KDECIIATEV (149 aa)) lie on the Cytoplasmic side of the membrane. Residues 649-693 (EDLGKEDSERSEATKCEPLDSDSEEKHRNHLKSDSSERKRTESLC) form a disordered region.

In terms of assembly, interacts with mib. Post-translationally, ubiquitinated by mib, leading to its endocytosis and subsequent degradation. As to expression, expressed in both mesodermal and neuroectodermal regions. In the developing nervous system, it is expressed in overlapping regions with deltaB (dlb) and deltaA (dla); in the neural plate, dld is expressed in patches of contiguous cells with dla, while dlb is confined to scattered cells within those patches that will differentiate as neurons. In somites, it marks the anterior part of each formed somite, while deltaC (dlc) marks the posterior part. In 24 hours embryos, expressed in the hindbrain in stripes adjacent to rhombomere boundaries, but not in the actual boundary cells.

Its subcellular location is the membrane. Acts as a ligand for Notch receptors and is involved in primary neurogenesis and somitogenesis. Can activate Notch receptors, thereby playing a key role in lateral inhibition, a process that prevents the immediate neighbors of each nascent neural cell from simultaneously embarking on neural differentiation. Required in somite segmentation to keep the oscillations of neighboring presomitic mesoderm cells synchronized. The polypeptide is Delta-like protein D (dld) (Danio rerio (Zebrafish)).